The chain runs to 338 residues: Nicotinate-nucleotide--dimethylbenzimidazole phosphoribosyltransferase (338 aa).

Glu305 acts as the Proton acceptor in catalysis.

This sequence belongs to the CobT family.

It catalyses the reaction 5,6-dimethylbenzimidazole + nicotinate beta-D-ribonucleotide = alpha-ribazole 5'-phosphate + nicotinate + H(+). It functions in the pathway nucleoside biosynthesis; alpha-ribazole biosynthesis; alpha-ribazole from 5,6-dimethylbenzimidazole: step 1/2. Catalyzes the synthesis of alpha-ribazole-5'-phosphate from nicotinate mononucleotide (NAMN) and 5,6-dimethylbenzimidazole (DMB). This Rhizobium etli (strain CIAT 652) protein is Nicotinate-nucleotide--dimethylbenzimidazole phosphoribosyltransferase.